A 494-amino-acid polypeptide reads, in one-letter code: Probable malate:quinone oxidoreductase (494 aa).

It belongs to the MQO family. FAD serves as cofactor.

The enzyme catalyses (S)-malate + a quinone = a quinol + oxaloacetate. It functions in the pathway carbohydrate metabolism; tricarboxylic acid cycle; oxaloacetate from (S)-malate (quinone route): step 1/1. This Helicobacter hepaticus (strain ATCC 51449 / 3B1) protein is Probable malate:quinone oxidoreductase.